Consider the following 375-residue polypeptide: Succinyl-diaminopimelate desuccinylase (375 aa).

His66 contributes to the Zn(2+) binding site. The active site involves Asp68. Asp99 is a Zn(2+) binding site. Glu133 acts as the Proton acceptor in catalysis. Glu134, Glu162, and His348 together coordinate Zn(2+).

The protein belongs to the peptidase M20A family. DapE subfamily. Homodimer. Zn(2+) serves as cofactor. The cofactor is Co(2+).

It catalyses the reaction N-succinyl-(2S,6S)-2,6-diaminopimelate + H2O = (2S,6S)-2,6-diaminopimelate + succinate. Its pathway is amino-acid biosynthesis; L-lysine biosynthesis via DAP pathway; LL-2,6-diaminopimelate from (S)-tetrahydrodipicolinate (succinylase route): step 3/3. Catalyzes the hydrolysis of N-succinyl-L,L-diaminopimelic acid (SDAP), forming succinate and LL-2,6-diaminopimelate (DAP), an intermediate involved in the bacterial biosynthesis of lysine and meso-diaminopimelic acid, an essential component of bacterial cell walls. In Escherichia coli O17:K52:H18 (strain UMN026 / ExPEC), this protein is Succinyl-diaminopimelate desuccinylase.